Consider the following 106-residue polypeptide: UPF0145 protein CPF_0876 (106 aa).

It belongs to the UPF0145 family.

The chain is UPF0145 protein CPF_0876 from Clostridium perfringens (strain ATCC 13124 / DSM 756 / JCM 1290 / NCIMB 6125 / NCTC 8237 / Type A).